A 342-amino-acid chain; its full sequence is Anthranilate phosphoribosyltransferase (342 aa).

Residues Gly-83, 86–87 (GD), Thr-91, 93–96 (NIST), 111–119 (KHGGRSVSS), and Ser-123 each bind 5-phospho-alpha-D-ribose 1-diphosphate. Position 83 (Gly-83) interacts with anthranilate. Ser-95 lines the Mg(2+) pocket. Arg-169 serves as a coordination point for anthranilate. Residues Asp-228 and Glu-229 each coordinate Mg(2+).

This sequence belongs to the anthranilate phosphoribosyltransferase family. In terms of assembly, homodimer. It depends on Mg(2+) as a cofactor.

The enzyme catalyses N-(5-phospho-beta-D-ribosyl)anthranilate + diphosphate = 5-phospho-alpha-D-ribose 1-diphosphate + anthranilate. It participates in amino-acid biosynthesis; L-tryptophan biosynthesis; L-tryptophan from chorismate: step 2/5. Functionally, catalyzes the transfer of the phosphoribosyl group of 5-phosphorylribose-1-pyrophosphate (PRPP) to anthranilate to yield N-(5'-phosphoribosyl)-anthranilate (PRA). This is Anthranilate phosphoribosyltransferase from Chromobacterium violaceum (strain ATCC 12472 / DSM 30191 / JCM 1249 / CCUG 213 / NBRC 12614 / NCIMB 9131 / NCTC 9757 / MK).